Reading from the N-terminus, the 95-residue chain is Enhancer of yellow 2b transcription factor (95 aa).

Belongs to the ENY2 family. As to expression, expressed specifically in testis.

Functionally, testis-specific paralog of the ubiquitously expressed transcription and mRNA export factor e(y)2. Cannot functionally replace e(y)2. The polypeptide is Enhancer of yellow 2b transcription factor (e(y)2b) (Drosophila melanogaster (Fruit fly)).